Here is a 160-residue protein sequence, read N- to C-terminus: Small ribosomal subunit protein uS9 (160 aa).

The protein belongs to the universal ribosomal protein uS9 family.

This is Small ribosomal subunit protein uS9 from Xanthobacter autotrophicus (strain ATCC BAA-1158 / Py2).